A 478-amino-acid polypeptide reads, in one-letter code: Cytochrome c biogenesis protein CcsB (478 aa).

A run of 3 helical transmembrane segments spans residues 30-50 (LRLAIGLFLAIALLSAVGTVI), 89-109 (TSWFLALLILFGSSLAACSLT), and 175-195 (FGPILVHVSLLLILLGAIWGS). The tract at residues 453–478 (LSSPPSPAKEPPPAARVGGTESLANG) is disordered. Over residues 456-466 (PPSPAKEPPPA) the composition is skewed to pro residues.

It belongs to the Ccs1/CcsB family. May interact with CcsA.

Its subcellular location is the cellular thylakoid membrane. In terms of biological role, required during biogenesis of c-type cytochromes (cytochrome c6 and cytochrome f) at the step of heme attachment. The sequence is that of Cytochrome c biogenesis protein CcsB from Synechococcus sp. (strain JA-3-3Ab) (Cyanobacteria bacterium Yellowstone A-Prime).